A 281-amino-acid chain; its full sequence is CCAAT/enhancer-binding protein epsilon (281 aa).

The segment at 1 to 30 (MSHGTYYECEPRGGQQPLEFSGGRAGPGEL) is disordered. A Glycyl lysine isopeptide (Lys-Gly) (interchain with G-Cter in SUMO2) cross-link involves residue Lys-121. Residue Ser-181 is modified to Phosphoserine. A bZIP domain is found at 204–267 (SLEYRLRRER…DTLRNLFRQI (64 aa)). Residues 208 to 245 (RLRRERNNIAVRKSRDKAKRRIMETQQKVLEYMAENER) form a basic motif region. A leucine-zipper region spans residues 246 to 267 (LRNRVDQLTQELDTLRNLFRQI).

Belongs to the bZIP family. C/EBP subfamily. In terms of assembly, binds DNA as a homodimer and as a heterodimer. Can form stable heterodimers with CEBPA, CEBPB and CEBPD. Interacts with GATA1 and SPI1. Interacts with SMARCD2. In terms of processing, phosphorylated.

The protein localises to the nucleus. Its function is as follows. Transcriptional activator. C/EBP are DNA-binding proteins that recognize two different motifs: the CCAAT homology common to many promoters and the enhanced core homology common to many enhancers. Required for the promyelocyte-myelocyte transition in myeloid differentiation. The protein is CCAAT/enhancer-binding protein epsilon (Cebpe) of Mus musculus (Mouse).